The primary structure comprises 242 residues: Phosphomannomutase 2 (242 aa).

D8 (nucleophile) is an active-site residue. Positions 8 and 10 each coordinate Mg(2+). The active-site Proton donor/acceptor is the D10. R17, R119, R130, and R137 together coordinate alpha-D-mannose 1-phosphate. N6-acetyllysine is present on K145. Residues S175 and D177 each coordinate alpha-D-mannose 1-phosphate. Mg(2+)-binding residues include D205, F217, D219, and T222.

The protein belongs to the eukaryotic PMM family. As to quaternary structure, homodimer.

The protein localises to the cytoplasm. It catalyses the reaction alpha-D-mannose 1-phosphate = D-mannose 6-phosphate. The protein operates within nucleotide-sugar biosynthesis; GDP-alpha-D-mannose biosynthesis; alpha-D-mannose 1-phosphate from D-fructose 6-phosphate: step 2/2. Its function is as follows. Involved in the synthesis of the GDP-mannose and dolichol-phosphate-mannose required for a number of critical mannosyl transfer reactions. The sequence is that of Phosphomannomutase 2 (Pmm2) from Mus musculus (Mouse).